We begin with the raw amino-acid sequence, 291 residues long: 33 kDa chaperonin (291 aa).

Cystine bridges form between C229/C231 and C262/C265.

This sequence belongs to the HSP33 family. In terms of processing, under oxidizing conditions two disulfide bonds are formed involving the reactive cysteines. Under reducing conditions zinc is bound to the reactive cysteines and the protein is inactive.

Its subcellular location is the cytoplasm. Redox regulated molecular chaperone. Protects both thermally unfolding and oxidatively damaged proteins from irreversible aggregation. Plays an important role in the bacterial defense system toward oxidative stress. The protein is 33 kDa chaperonin of Aliivibrio salmonicida (strain LFI1238) (Vibrio salmonicida (strain LFI1238)).